The chain runs to 134 residues: Small ribosomal subunit protein bS6 (134 aa).

The interval 100 to 134 (SFLARDETDRRERSEETAEGEGEPDHSANEAVVTA) is disordered. Basic and acidic residues predominate over residues 103–115 (ARDETDRRERSEE).

The protein belongs to the bacterial ribosomal protein bS6 family.

Its function is as follows. Binds together with bS18 to 16S ribosomal RNA. This chain is Small ribosomal subunit protein bS6, found in Acidithiobacillus ferrooxidans (strain ATCC 23270 / DSM 14882 / CIP 104768 / NCIMB 8455) (Ferrobacillus ferrooxidans (strain ATCC 23270)).